Reading from the N-terminus, the 141-residue chain is Nucleoside diphosphate kinase (141 aa).

ATP contacts are provided by Lys-11, Phe-59, Arg-87, Thr-93, Arg-104, and Asn-114. Catalysis depends on His-117, which acts as the Pros-phosphohistidine intermediate.

Belongs to the NDK family. Homotetramer. Requires Mg(2+) as cofactor.

It is found in the cytoplasm. It carries out the reaction a 2'-deoxyribonucleoside 5'-diphosphate + ATP = a 2'-deoxyribonucleoside 5'-triphosphate + ADP. The enzyme catalyses a ribonucleoside 5'-diphosphate + ATP = a ribonucleoside 5'-triphosphate + ADP. Its function is as follows. Major role in the synthesis of nucleoside triphosphates other than ATP. The ATP gamma phosphate is transferred to the NDP beta phosphate via a ping-pong mechanism, using a phosphorylated active-site intermediate. This is Nucleoside diphosphate kinase from Herminiimonas arsenicoxydans.